The primary structure comprises 210 residues: Eukaryotic translation initiation factor 2 subunit gamma (210 aa).

Residues 1 to 196 (IGHVAHGKST…HLVETITPPR (196 aa)) enclose the tr-type G domain. Positions 2 to 9 (GHVAHGKS) are G1. GTP is bound at residue 5-10 (AHGKST). Positions 30-34 (NITIK) are G2. The segment at 85–88 (DCPG) is G3. Residues 141 to 144 (NKID) and 174 to 176 (SAI) each bind GTP. Residues 141–144 (NKID) are G4. The segment at 174 to 176 (SAI) is G5.

Belongs to the TRAFAC class translation factor GTPase superfamily. Classic translation factor GTPase family. EIF2G subfamily. Eukaryotic translation initiation factor 2 eIF2 is a heterotrimeric complex composed of an alpha, a beta and a gamma subunit. The factors eIF-1, eIF-2, eIF-3, TIF5/eIF-5 and methionyl-tRNAi form a multifactor complex (MFC) that may bind to the 40S ribosome.

The protein localises to the cytoplasm. Its subcellular location is the cytosol. It carries out the reaction GTP + H2O = GDP + phosphate + H(+). As a subunit of eukaryotic initiation factor 2 eIF2, involved in the early steps of protein synthesis. In the presence of GTP, eIF-2 forms a ternary complex with initiator tRNA Met-tRNAi and then recruits the 40S ribosomal complex and initiation factors eIF-1, eIF-1A and eIF-3 to form the 43S pre-initiation complex (43S PIC), a step that determines the rate of protein translation. The 43S PIC binds to mRNA and scans downstream to the initiation codon, where it forms a 48S initiation complex by codon-anticodon base pairing. This leads to the displacement of eIF-1 to allow GTPase-activating protein (GAP) eIF-5-mediated hydrolysis of eIF2-bound GTP. Hydrolysis of GTP and release of Pi, which makes GTP hydrolysis irreversible, causes the release of the eIF-2-GDP binary complex from the 40S subunit, an event that is essential for the subsequent joining of the 60S ribosomal subunit to form an elongation-competent 80S ribosome. In order for eIF-2 to recycle and catalyze another round of initiation, the GDP bound to eIF-2 must be exchanged with GTP by way of a reaction catalyzed by GDP-GTP exchange factor (GEF) eIF-2B. This chain is Eukaryotic translation initiation factor 2 subunit gamma, found in Spironucleus vortens.